The primary structure comprises 847 residues: Follistatin-related protein 5 (847 aa).

Residues 1-20 form the signal peptide; the sequence is MFRCWSAILILGFIFLASEG. In terms of domain architecture, Kazal-like spans 81 to 135; sequence ETRHAECACMDLCKQHYKPVCGSDGEFYENHCEVHRAACLKKQKITIVHNEDCFF. Disulfide bonds link Cys-87/Cys-119, Cys-93/Cys-112, and Cys-101/Cys-133. EF-hand domains follow at residues 175-210 and 211-246; these read RKKP…EELN and KDLS…QVIQ. 9 residues coordinate Ca(2+): Asp-188, Asp-190, Asn-192, Glu-199, Asp-226, Asn-228, Asp-230, His-232, and Glu-237. Ig-like domains lie at 250 to 338 and 341 to 426; these read PEDQ…FQVN and PVIR…EDIS. Intrachain disulfides connect Cys-270–Cys-321 and Cys-362–Cys-413. N-linked (GlcNAc...) asparagine glycans are attached at residues Asn-318 and Asn-394.

Its subcellular location is the secreted. This is Follistatin-related protein 5 (Fstl5) from Mus musculus (Mouse).